The primary structure comprises 120 residues: Large ribosomal subunit protein bL12 (120 aa).

It belongs to the bacterial ribosomal protein bL12 family. Homodimer. Part of the ribosomal stalk of the 50S ribosomal subunit. Forms a multimeric L10(L12)X complex, where L10 forms an elongated spine to which 2 to 4 L12 dimers bind in a sequential fashion. Binds GTP-bound translation factors.

In terms of biological role, forms part of the ribosomal stalk which helps the ribosome interact with GTP-bound translation factors. Is thus essential for accurate translation. This is Large ribosomal subunit protein bL12 from Shouchella clausii (strain KSM-K16) (Alkalihalobacillus clausii).